The following is a 101-amino-acid chain: uncharacterized protein (101 aa).

Functionally, may regulate the expression of phage structural components with protein P13. This is an uncharacterized protein from Pseudoalteromonas phage PM2 (Bacteriophage PM2).